The sequence spans 130 residues: Small ribosomal subunit protein uS8 (130 aa).

It belongs to the universal ribosomal protein uS8 family. As to quaternary structure, part of the 30S ribosomal subunit.

Functionally, one of the primary rRNA binding proteins, it binds directly to 16S rRNA central domain where it helps coordinate assembly of the platform of the 30S subunit. The sequence is that of Small ribosomal subunit protein uS8 from Methanococcus maripaludis (strain C6 / ATCC BAA-1332).